Consider the following 254-residue polypeptide: UPF0246 protein FTH_1656 (254 aa).

The protein belongs to the UPF0246 family.

The chain is UPF0246 protein FTH_1656 from Francisella tularensis subsp. holarctica (strain OSU18).